Here is a 317-residue protein sequence, read N- to C-terminus: Exopolysaccharide production protein ExoZ (317 aa).

Transmembrane regions (helical) follow at residues 14 to 34, 53 to 73, 100 to 120, 132 to 152, 185 to 205, 206 to 226, and 268 to 288; these read TIGA…MWVI, IVPV…AGLF, IWPV…YAVF, LPVV…VAFD, LAVG…IGVL, GLPF…IGVL, and IGLG…LIGI.

It belongs to the acyltransferase 3 family.

The protein resides in the cell membrane. In terms of biological role, required for the acetyl modification of the third sugar (glucose) of the octasaccharide subunit of succinoglycan (EPS I). The polypeptide is Exopolysaccharide production protein ExoZ (exoZ) (Rhizobium meliloti (strain 1021) (Ensifer meliloti)).